Here is a 789-residue protein sequence, read N- to C-terminus: MGSSIFCLHLILSSFFLFTFLLAAVNGSKKCYIVYMGAHSHGPSPTSADLELATDSHYDLLGSIFGSREKAKEAIIYSYNRHINGFAALLEEEEAADIAKNPNVVSVFLSKEHKLHTTRSWEFLGLHRRGQNSAWQKGRFGENTIIGNIDTGVWPESQSFSDKGYGTVPSKWRGGLCQINKLPGSMKNTCNRKLIGARYYNKAFEAHNGQLDPLLHTARDFVGHGTHTLSTAGGNFVPGARVFAVGNGTAKGGSPRARVAAYKVCWSLTDPASCYGADVLAAIDQAIDDGVDVINVSFGVSYVVTAEGIFTDEISIGAFHAISKNILLVASAGNDGPTPGTVANVAPWVFTIAASTLDRDFSSNLTINNQLIEGASLFVNLPPNQAFSLILSTDAKLANATFRDAQLCRRGTLDRTKVNGKIVLCTREGKIKSVAEGLEALTAGARGMILNNQMQNGKTLSAEPHVFSTVNTPPRRAKSRPHGVKTTAIGDEDDPLKTGDTIKMSRARTLFGRKPAPVMASFSSRGPNKIQPSILKPDVTAPGVNILAAYSEFASASSLLVDNRRGFKFNVLQGTSMSCPHASGIAGLLKTRHPSWSPAAIKSAIMTTATTLDNTNRPIQDAFDKTLADAFAYGSGHVRPDLAIEPGLVYDLSLTDYLNFLCASGYDQQLISALNFNRTFICSGSHSVNDLNYPSITLPNLRLKPVTIARTVTNVGPPSTYTVSTRSPNGYSIAVVPPSLTFTKIGERKTFKVIVQASSAATRRKYEFGDLRWTDGKHIVRSPITVKRR.

Positions 1 to 27 (MGSSIFCLHLILSSFFLFTFLLAAVNG) are cleaved as a signal peptide. The 85-residue stretch at 32–116 (YIVYMGAHSH…VFLSKEHKLH (85 aa)) folds into the Inhibitor I9 domain. Residues 120-644 (SWEFLGLHRR…SGHVRPDLAI (525 aa)) enclose the Peptidase S8 domain. Residues D150 and H224 each act as charge relay system in the active site. Residues 401 to 489 (TFRDAQLCRR…RPHGVKTTAI (89 aa)) enclose the PA domain. Residues 468 to 499 (STVNTPPRRAKSRPHGVKTTAIGDEDDPLKTG) are disordered. Catalysis depends on S576, which acts as the Charge relay system.

The protein belongs to the peptidase S8 family. As to expression, expressed in roots, stems, flowers and young leaves. Barely detectable in matures leaves.

It localises to the secreted. Produces a rapid alkalinization of the cellular media and the induction of defense-related genes, including chitinase 1b, chalcone synthase and CYP93A1. The receptor for GmSubPep is probably different from the receptor(s) for GmPep890 and GmPep914. In Glycine max (Soybean), this protein is Subtilisin-like protease Glyma18g48580.